The chain runs to 523 residues: Succinate-semialdehyde dehydrogenase, mitochondrial (523 aa).

The N-terminal 35 residues, 1-35, are a transit peptide targeting the mitochondrion; it reads MATCFLLRSFWAARPALPPPGRFRPEPAGTPRRSY. At lysine 74 the chain carries N6-acetyllysine. Lysine 114 carries the N6-acetyllysine; alternate modification. Lysine 114 is modified (N6-succinyllysine; alternate). An N6-succinyllysine modification is found at lysine 123. Lysine 128 carries the post-translational modification N6-acetyllysine. Lysine 172 carries the post-translational modification N6-succinyllysine. NAD(+) contacts are provided by residues arginine 201 and 216–219; that span reads KPAE. Arginine 201 contributes to the substrate binding site. N6-acetyllysine; alternate is present on lysine 253. N6-succinyllysine; alternate is present on lysine 253. Position 272–277 (272–277) interacts with NAD(+); it reads GSTATG. Catalysis depends on glutamate 294, which acts as the Proton acceptor. Residue arginine 322 coordinates substrate. Catalysis depends on cysteine 328, which acts as the Nucleophile. A disulfide bridge connects residues cysteine 328 and cysteine 330. Lysine 347 is subject to N6-acetyllysine; alternate. At lysine 347 the chain carries N6-succinyllysine; alternate. The residue at position 353 (lysine 353) is an N6-acetyllysine. Lysine 390 bears the N6-succinyllysine mark. Residue lysine 399 is modified to N6-acetyllysine. Position 403 is a phosphoserine (serine 403). Serine 486 serves as a coordination point for substrate. Serine 487 is modified (phosphoserine).

Belongs to the aldehyde dehydrogenase family. In terms of assembly, homotetramer.

The protein localises to the mitochondrion. It carries out the reaction succinate semialdehyde + NAD(+) + H2O = succinate + NADH + 2 H(+). It participates in amino-acid degradation; 4-aminobutanoate degradation. With respect to regulation, redox-regulated. Inhibited under oxydizing conditions. Functionally, catalyzes one step in the degradation of the inhibitory neurotransmitter gamma-aminobutyric acid (GABA). This chain is Succinate-semialdehyde dehydrogenase, mitochondrial (Aldh5a1), found in Mus musculus (Mouse).